A 933-amino-acid chain; its full sequence is Isoleucine--tRNA ligase (933 aa).

The short motif at 57 to 67 (PYANGNIHVGH) is the 'HIGH' region element. Residue Glu-554 coordinates L-isoleucyl-5'-AMP. Positions 595–599 (KMSKS) match the 'KMSKS' region motif. Lys-598 contributes to the ATP binding site.

The protein belongs to the class-I aminoacyl-tRNA synthetase family. IleS type 1 subfamily. In terms of assembly, monomer.

It is found in the cytoplasm. It carries out the reaction tRNA(Ile) + L-isoleucine + ATP = L-isoleucyl-tRNA(Ile) + AMP + diphosphate. In terms of biological role, catalyzes the attachment of isoleucine to tRNA(Ile). As IleRS can inadvertently accommodate and process structurally similar amino acids such as valine, to avoid such errors it has two additional distinct tRNA(Ile)-dependent editing activities. One activity is designated as 'pretransfer' editing and involves the hydrolysis of activated Val-AMP. The other activity is designated 'posttransfer' editing and involves deacylation of mischarged Val-tRNA(Ile). The polypeptide is Isoleucine--tRNA ligase (Streptococcus pyogenes serotype M28 (strain MGAS6180)).